The primary structure comprises 122 residues: MLNTLLVVGFGGFIGAILRMLSINLVNKFFPYSISFGTLFVNVLGSFIIGLLFSYAQNKGLSPLLKSFISTGFLGAFTTFSTFSYQNLLLLQSGNYLHFALNIILNVFLCLFAAWLGFLIFK.

4 helical membrane passes run 6-26, 33-53, 60-80, and 101-121; these read LVVGFGGFIGAILRMLSINLV, SISFGTLFVNVLGSFIIGLLF, GLSPLLKSFISTGFLGAFTTF, and LNIILNVFLCLFAAWLGFLIF. 2 residues coordinate Na(+): glycine 75 and threonine 78.

This sequence belongs to the fluoride channel Fluc/FEX (TC 1.A.43) family.

Its subcellular location is the cell inner membrane. It catalyses the reaction fluoride(in) = fluoride(out). Na(+) is not transported, but it plays an essential structural role and its presence is essential for fluoride channel function. Its function is as follows. Fluoride-specific ion channel. Important for reducing fluoride concentration in the cell, thus reducing its toxicity. This chain is Fluoride-specific ion channel FluC, found in Campylobacter jejuni subsp. jejuni serotype O:2 (strain ATCC 700819 / NCTC 11168).